The primary structure comprises 235 residues: MTRVVISVGGSVLVPSLDAHRLKEWAEALINLTNAGIQIFAVVGGGGEARRYIEACRDIGLDEASSDEIGIQVTRINAALLIGALKEYAYPVVAESYREAKTAAVSGKIVVMGGVTPGQTTDAVAAVLAEEVGASMMINMTAIDGIYTADPKKDAKAKRHDILSPQGLIDLIMKEKMCAGSNMVIDLVAAKITERSGIPLVVIDGRDPALIEKALLKGEFAGTIVGNSAIRFPIV.

10–11 contacts ATP; that stretch reads GS. Residue Gly-45 coordinates UMP. Positions 46 and 50 each coordinate ATP. UMP is bound by residues Asp-67 and 115-121; that span reads VTPGQTT. ATP is bound by residues Thr-141, Tyr-147, and Asp-150.

The protein belongs to the UMP kinase family. Homohexamer.

It is found in the cytoplasm. The enzyme catalyses UMP + ATP = UDP + ADP. It participates in pyrimidine metabolism; CTP biosynthesis via de novo pathway; UDP from UMP (UMPK route): step 1/1. With respect to regulation, inhibited by UTP. In terms of biological role, catalyzes the reversible phosphorylation of UMP to UDP. This chain is Uridylate kinase, found in Methanocorpusculum labreanum (strain ATCC 43576 / DSM 4855 / Z).